A 320-amino-acid polypeptide reads, in one-letter code: 4-hydroxyproline 2-epimerase (320 aa).

Cysteine 98 acts as the Proton acceptor in catalysis. Substrate contacts are provided by residues 99–100, histidine 218, and aspartate 242; that span reads GH. Cysteine 246 serves as the catalytic Proton donor. 247 to 248 contacts substrate; the sequence is GT.

Belongs to the proline racemase family.

The enzyme catalyses trans-4-hydroxy-L-proline = cis-4-hydroxy-D-proline. Catalyzes the epimerization of trans-4-hydroxy-L-proline (t4LHyp) to cis-4-hydroxy-D-proline (c4DHyp). Is likely involved in a degradation pathway that converts t4LHyp to alpha-ketoglutarate. Displays no proline racemase activity. The chain is 4-hydroxyproline 2-epimerase from Burkholderia pseudomallei (strain 1710b).